We begin with the raw amino-acid sequence, 353 residues long: Ribosomal RNA small subunit methyltransferase H (353 aa).

S-adenosyl-L-methionine is bound by residues alanine 39–histidine 41, aspartate 58, phenylalanine 90, aspartate 108, and glutamine 115. The interval serine 334–glycine 353 is disordered. Over residues alanine 341–glycine 353 the composition is skewed to basic residues.

Belongs to the methyltransferase superfamily. RsmH family.

The protein localises to the cytoplasm. It carries out the reaction cytidine(1402) in 16S rRNA + S-adenosyl-L-methionine = N(4)-methylcytidine(1402) in 16S rRNA + S-adenosyl-L-homocysteine + H(+). Specifically methylates the N4 position of cytidine in position 1402 (C1402) of 16S rRNA. The chain is Ribosomal RNA small subunit methyltransferase H from Bifidobacterium animalis subsp. lactis (strain AD011).